The chain runs to 338 residues: uncharacterized protein (338 aa).

A run of 6 helical transmembrane segments spans residues 13-33, 71-91, 110-130, 176-196, 218-238, and 301-321; these read PAYS…DFLM, GLYS…ALFF, TLCF…VYVP, YGYR…LLFY, LITG…LDVA, and FRGF…MFVF. 3 Solcar repeats span residues 13–100, 108–202, and 216–328; these read PAYS…TKRH, PETL…LRQV, and RELI…IIRL.

Belongs to the mitochondrial carrier (TC 2.A.29) family.

It localises to the mitochondrion inner membrane. In terms of biological role, mitochondrial solute carriers shuttle metabolites, nucleotides, and cofactors through the mitochondrial inner membrane. This is an uncharacterized protein from Schizosaccharomyces pombe (strain 972 / ATCC 24843) (Fission yeast).